A 398-amino-acid polypeptide reads, in one-letter code: FK506-binding protein 4 (398 aa).

3 disordered regions span residues 66–120, 164–232, and 245–288; these read EVDE…DEYE, VKHP…QLAK, and DLIA…KKNK. The span at 170-228 shows a compositional bias: acidic residues; it reads EPLEDLYSDEDSEEYSDDELDQEIEEDDELDHDEASSEESDEDQEFYDAISEGDEDIDE. Residues 264-287 are compositionally biased toward basic and acidic residues; that stretch reads PETKKSKKTKDEKNTKATENEKKN. A PPIase FKBP-type domain is found at 312–398; it reads GSKVGMRYIG…TFDVKLVSLK (87 aa).

This sequence belongs to the FKBP-type PPIase family. FKBP3/4 subfamily. As to quaternary structure, binds to histones H3 and H4.

The protein localises to the nucleus. The enzyme catalyses [protein]-peptidylproline (omega=180) = [protein]-peptidylproline (omega=0). Its activity is regulated as follows. Inhibited by both FK506 and rapamycin. Its function is as follows. PPIase that acts as a histone chaperone. Histone proline isomerase that increases the rate of cis-trans isomerization at prolines on the histone H3 N-terminal tail. Proline isomerization influences H3 methylation thereby regulating gene expression. The chain is FK506-binding protein 4 (FPR4) from Candida glabrata (strain ATCC 2001 / BCRC 20586 / JCM 3761 / NBRC 0622 / NRRL Y-65 / CBS 138) (Yeast).